A 484-amino-acid chain; its full sequence is Arginine ADP-riboxanase OspC2 (484 aa).

NAD(+)-binding residues include H143, Q144, S145, L149, I162, N172, F188, H206, F211, D231, and E326. The active site involves E326. ANK repeat units follow at residues 414–444 and 451–480; these read LYDVEYLLSEDSANYKVLEYFISNGLVDVNK and SGDTMLDNAMKSKDSKTIDFLLKNGAVSGK.

This sequence belongs to the OspC family.

The protein resides in the secreted. The catalysed reaction is L-arginyl-[protein] + NAD(+) = ADP-riboxanated L-argininyl-[protein] + nicotinamide + NH4(+) + H(+). In terms of biological role, ADP-riboxanase effector that mediates arginine ADP-riboxanation of host caspases. ADP-riboxanation of host apoptotic caspases (CASP3 and CASP9) prevents their activation, thereby inhibiting host cell extrinsic and intrinsic apoptosis. Does not catalyze ADP-riboxanation of host CASP4/CASP11 or CASP8. In contrast to Ospc1 and OspC3, not able to inactivate host calmodulin. This Shigella flexneri protein is Arginine ADP-riboxanase OspC2.